Consider the following 1066-residue polypeptide: MAGNDWINSYLEAILDAGGAAGEISAAAGGGGDGAAATGEKRDKSSLMLRERGRFSPARYFVEEVISGFDETDLYKTWVRTAAMRSPQERNTRLENMSWRIWNLARKKKQIEGEEASRLAKQRLEREKARRYAAADMSEDLSEGEKGENINESSSTHDESTRGRMPRIGSTDAIEAWASQHKDKKLYIVLISIHGLIRGENMELGRDSDTGGQVKYVVELARALGSTPGVYRVDLLTRQISAPDVDWSYGEPTEMLSPRNSENFGHDMGESSGAYIVRIPFGPRDKYIPKEHLWPHIQEFVDGALVHIMQMSKVLGEQVGSGQLVWPVVIHGHYADAGDSAALLSGALNVPMIFTGHSLGRDKLEQLLKQGRQTRDEINTIYKIMRRIEAEELCLDASEIIITSTRQEIEQQWGLYDGFDLTMARKLRARIKRGVSCYGRYMPRMIAVPPGMEFSHIVPHDVDQDGEEANEDGSGSTDPPIWADIMRFFSNPRKPMILALARPDPKKNITTLVKAFGEHRELRNLANLTLIMGNRDVIDEMSSTNSAVLTSILKLIDKYDLYGQVAYPKHHKQSEVPDIYRLAARTKGVFINCAFIEPFGLTLIEAAAYGLPMVATRNGGPVDIHRVLDNGILVDPHNQNEIAEALYKLVSDKQLWAQCRQNGLKNIHQFSWPEHCKNYLSRVGTLKPRHPRWQKSDDATEVSEADSPGDSLRDVHDISLNLKLSLDSEKSSTKENSVRRNLEDAVQKLSRGVSANRKTESVENMEATTGNKWPSLRRRKHIVVIAIDSVQDANLVEIIKNIFVASSNERLSGSVGFVLSTSRAISEVHSLLTSGGIEATDFDAFICNSGSDLCYPSSNSEDMLSPAELPFMIDLDYHTQIEYRWGGEGLRKTLICWAAEKSEGGQVVLVEDEECSSTYCISFRVKNAEAVPPVKELRKTMRIQALRCHVLYSHDGSKLNVIPVLASRSQALRYLYIRWGVELSNMTVVVGESGDTDYEGLLGGVHKTIILKGSFNAVPNQVHAARSYSLQDVISFDKPGITSIEGYGPDNLKSALQQFGILKDNV.

2 disordered regions span residues 132–166 and 688–714; these read YAAA…GRMP and PRHP…SLRD. A compositionally biased stretch (basic and acidic residues) spans 143 to 162; that stretch reads EGEKGENINESSSTHDESTR.

This sequence belongs to the glycosyltransferase 1 family. In terms of assembly, homodimer or homotetramer. As to expression, expressed in germinating seeds.

The enzyme catalyses beta-D-fructose 6-phosphate + UDP-alpha-D-glucose = sucrose 6(F)-phosphate + UDP + H(+). The protein operates within glycan biosynthesis; sucrose biosynthesis; sucrose from D-fructose 6-phosphate and UDP-alpha-D-glucose: step 1/2. Its activity is regulated as follows. Activity is regulated by phosphorylation and moderated by concentration of metabolites and light. In terms of biological role, plays a role in photosynthetic sucrose synthesis by catalyzing the rate-limiting step of sucrose biosynthesis from UDP-glucose and fructose- 6-phosphate. Involved in the regulation of carbon partitioning in the leaves of plants. May regulate the synthesis of sucrose and therefore play a major role as a limiting factor in the export of photoassimilates out of the leaf. Plays a role for sucrose availability that is essential for plant growth and fiber elongation. The protein is Probable sucrose-phosphate synthase 4 (SPS4) of Oryza sativa subsp. japonica (Rice).